The primary structure comprises 670 residues: Neutral ceramidase (670 aa).

An N-terminal signal peptide occupies residues 1–24 (MSRSAFTALLLSCVLLALSMPARA). Histidine 61 is a binding site for Mg(2+). Residues asparagine 84, glutamine 92, and aspartate 111 each coordinate substrate. Position 121 (histidine 121) interacts with Zn(2+). Serine 130 provides a ligand contact to substrate. Histidine 228 contacts Zn(2+). The active-site Nucleophile is serine 274. A disulfide bond links cysteine 346 and cysteine 394. Glutamate 435 is a Zn(2+) binding site. Tyrosine 469 serves as a coordination point for substrate. A Zn(2+)-binding site is contributed by tyrosine 472. Mg(2+) contacts are provided by aspartate 603, aspartate 605, and threonine 608. Residues 644 to 670 (NAKNFWTQKISEIGGSTRSFEVLGTTP) are required for correct folding and localization.

Belongs to the neutral ceramidase family. In terms of assembly, homodimer. Zn(2+) is required as a cofactor. Requires Mg(2+) as cofactor.

The protein resides in the secreted. It catalyses the reaction an N-acylsphing-4-enine + H2O = sphing-4-enine + a fatty acid. Its activity is regulated as follows. Inhibited by EDTA, EGTA and D/L-sphinganine D-erythro-sphingosine. L-erythro-sphingosine is a less powerful inhibitor. Stimulated by glycerophospholipids: cardiolipin is the most effective, followed by phosphatidic acid, phosphatidylethanolamine and phosphatidylglycerol, whereas phosphatidylcholine, lysophosphatidic acid and diacylglycerol are less effective. Its function is as follows. Catalyzes the cleavage of the N-acyl linkage of the ceramides (Cers) to yield sphingosine (Sph) and free fatty acid at an optimal pH of 8-9. Also catalyzes the synthesis of Cers from Sph and fatty acid. The polypeptide is Neutral ceramidase (Pseudomonas aeruginosa (strain ATCC 15692 / DSM 22644 / CIP 104116 / JCM 14847 / LMG 12228 / 1C / PRS 101 / PAO1)).